The following is a 259-amino-acid chain: Global transcriptional regulator CodY (259 aa).

The GAF domain stretch occupies residues 1–155 (MNLLEKTRKI…GATVVGMEIL (155 aa)). The segment at residues 203 to 222 (ASKIADRVGITRSVIVNALR) is a DNA-binding region (H-T-H motif). Position 215 is a phosphoserine (serine 215).

It belongs to the CodY family.

Its subcellular location is the cytoplasm. In terms of biological role, DNA-binding global transcriptional regulator which is involved in the adaptive response to starvation and acts by directly or indirectly controlling the expression of numerous genes in response to nutrient availability. During rapid exponential growth, CodY is highly active and represses genes whose products allow adaptation to nutrient depletion. The polypeptide is Global transcriptional regulator CodY (Geobacillus kaustophilus (strain HTA426)).